The primary structure comprises 389 residues: Na(+)/H(+) antiporter NhaA (389 aa).

Transmembrane regions (helical) follow at residues 14–34 (AGGI…NSPL), 59–79 (LILW…GLEV), 95–115 (SLPT…YLLF), 124–144 (AGWA…MALL), 154–174 (VFLL…IALF), 177–197 (TDLS…LVGL), 213–233 (LILW…GVII), 257–277 (PWST…VYVG), 292–312 (IALG…YIAV), 328–348 (IAPV…IASL), and 363–383 (LGTL…LSKV).

Belongs to the NhaA Na(+)/H(+) (TC 2.A.33) antiporter family.

The protein localises to the cell inner membrane. The catalysed reaction is Na(+)(in) + 2 H(+)(out) = Na(+)(out) + 2 H(+)(in). Functionally, na(+)/H(+) antiporter that extrudes sodium in exchange for external protons. The protein is Na(+)/H(+) antiporter NhaA of Shewanella baltica (strain OS155 / ATCC BAA-1091).